Consider the following 140-residue polypeptide: Smith-Magenis syndrome chromosomal region candidate gene 5 protein (140 aa).

The interval 43–77 is disordered; sequence CTGPSSQAPPQPPQASPPAAADHSRTPSLLASSHS. Over residues 49-58 the composition is skewed to pro residues; that stretch reads QAPPQPPQAS.

As to expression, widely expressed.

This chain is Smith-Magenis syndrome chromosomal region candidate gene 5 protein (SMCR5), found in Homo sapiens (Human).